The primary structure comprises 299 residues: 33 kDa chaperonin (299 aa).

2 disulfides stabilise this stretch: C234-C236 and C268-C271.

This sequence belongs to the HSP33 family. In terms of processing, under oxidizing conditions two disulfide bonds are formed involving the reactive cysteines. Under reducing conditions zinc is bound to the reactive cysteines and the protein is inactive.

Its subcellular location is the cytoplasm. Its function is as follows. Redox regulated molecular chaperone. Protects both thermally unfolding and oxidatively damaged proteins from irreversible aggregation. Plays an important role in the bacterial defense system toward oxidative stress. The sequence is that of 33 kDa chaperonin from Pseudomonas putida (strain ATCC 700007 / DSM 6899 / JCM 31910 / BCRC 17059 / LMG 24140 / F1).